The chain runs to 477 residues: SH3 domain-binding protein 5 homolog (477 aa).

Positions Gln-12–Glu-95 form a coiled coil. Ser-113 and Ser-115 each carry phosphoserine. The stretch at Asn-122–Arg-221 forms a coiled coil. Disordered regions lie at residues Glu-224 to Ser-258 and Gly-276 to Ala-306. Positions Glu-291 to Gly-305 are enriched in acidic residues.

Belongs to the SH3BP5 family.

The chain is SH3 domain-binding protein 5 homolog (pcs) from Drosophila melanogaster (Fruit fly).